Consider the following 125-residue polypeptide: Fluoride-specific ion channel FluC (125 aa).

4 helical membrane-spanning segments follow: residues 1-21 (MIQAILVAFGGAIGSVLRYYV), 32-52 (AFPWGTLAVNVVGCFVIGVFA), 68-88 (LLITGFLGGFTTFSAFSLDAI), and 101-121 (IYIAASVGLSMAAVIAGLAVM). Residues Gly-75 and Thr-78 each contribute to the Na(+) site.

Belongs to the fluoride channel Fluc/FEX (TC 1.A.43) family.

The protein resides in the cell inner membrane. It carries out the reaction fluoride(in) = fluoride(out). Its activity is regulated as follows. Na(+) is not transported, but it plays an essential structural role and its presence is essential for fluoride channel function. In terms of biological role, fluoride-specific ion channel. Important for reducing fluoride concentration in the cell, thus reducing its toxicity. This is Fluoride-specific ion channel FluC from Rhizobium johnstonii (strain DSM 114642 / LMG 32736 / 3841) (Rhizobium leguminosarum bv. viciae).